The following is a 203-amino-acid chain: Nucleoside triphosphate pyrophosphatase (203 aa).

Catalysis depends on Asp-77, which acts as the Proton acceptor.

It belongs to the Maf family. A divalent metal cation serves as cofactor.

It localises to the cytoplasm. It catalyses the reaction a ribonucleoside 5'-triphosphate + H2O = a ribonucleoside 5'-phosphate + diphosphate + H(+). The enzyme catalyses a 2'-deoxyribonucleoside 5'-triphosphate + H2O = a 2'-deoxyribonucleoside 5'-phosphate + diphosphate + H(+). Functionally, nucleoside triphosphate pyrophosphatase. May have a dual role in cell division arrest and in preventing the incorporation of modified nucleotides into cellular nucleic acids. The protein is Nucleoside triphosphate pyrophosphatase of Rickettsia felis (strain ATCC VR-1525 / URRWXCal2) (Rickettsia azadi).